The chain runs to 443 residues: Protein SCAR (443 aa).

The tract at residues M1–T96 is interaction with brk1 and abiA. Positions V166 to K201 form a coiled coil. 2 disordered regions span residues A176–V197 and I220–L386. Positions Q178–G192 are enriched in basic residues. The segment covering N221 to N252 has biased composition (polar residues). Low complexity-rich tracts occupy residues S263 to Y277 and N285 to N305. Residues T306 to M323 are compositionally biased toward pro residues. The span at Q324–N338 shows a compositional bias: polar residues. Over residues P346–M365 the composition is skewed to pro residues. The 18-residue stretch at A382–A399 folds into the WH2 domain.

The protein belongs to the SCAR/WAVE family. As to quaternary structure, part of a Scar/WAVE complex containing brk1, scrA, abiA, pirA and napA. Interacts with brk1 and abiA.

Its subcellular location is the cytoplasm. It is found in the cytoskeleton. It localises to the cell projection. The protein resides in the pseudopodium tip. The protein localises to the filopodium tip. Functionally, involved in regulation of actin and microtubule organization. Regulates phagocytosis and macropinocytosis. This is Protein SCAR (scrA) from Dictyostelium discoideum (Social amoeba).